A 424-amino-acid chain; its full sequence is MYQSPLIQDLHDRGLIAQITDAAALDKLLTEESVTLYCGFDPTADSLHLGHLVPVLILKRFQEAGHKPIALVGGATGMIGDPSFKATERKLNTPDVIASWVGKIRGQVEPFLKFDGANAAIMANNYDWFGGMNCLEFMRDIGKHFSVNAMIKKESVQQRLTREDQGISYTEFSYSLLQGYDFAELNKRYGCVLQIGGSDQWGNIVAGTDLTRRLHQKHVFGLTLPLITKADGTKFGKTESGAIWLDPKKTSPYAFYQFWLNTSDADVYKFMNFFTFLPVARIAEIEAADKASGTKPEAQRILAEEATRLVHGEVALMAARRITECLFSGQLADLTENDLEQLAQDGMPGVQLEKSNTGLIDALVASGLAKSKSEARTFIQSGSVAINGNKAEALDHAIGGDELLYGRFTILRRGKKNYGLISWQ.

Tyr-37 lines the L-tyrosine pocket. Residues 42–51 (PTADSLHLGH) carry the 'HIGH' region motif. L-tyrosine-binding residues include Tyr-174 and Gln-178. The 'KMSKS' region signature appears at 234–238 (KFGKT). Lys-237 is a binding site for ATP. An S4 RNA-binding domain is found at 357–414 (TGLIDALVASGLAKSKSEARTFIQSGSVAINGNKAEALDHAIGGDELLYGRFTILRRG).

The protein belongs to the class-I aminoacyl-tRNA synthetase family. TyrS type 1 subfamily. In terms of assembly, homodimer.

The protein localises to the cytoplasm. The catalysed reaction is tRNA(Tyr) + L-tyrosine + ATP = L-tyrosyl-tRNA(Tyr) + AMP + diphosphate + H(+). Catalyzes the attachment of tyrosine to tRNA(Tyr) in a two-step reaction: tyrosine is first activated by ATP to form Tyr-AMP and then transferred to the acceptor end of tRNA(Tyr). The protein is Tyrosine--tRNA ligase of Dechloromonas aromatica (strain RCB).